Here is a 287-residue protein sequence, read N- to C-terminus: UPF0761 membrane protein MS0032 (287 aa).

Transmembrane regions (helical) follow at residues methionine 37–phenylalanine 57, serine 93–isoleucine 113, phenylalanine 128–methionine 148, leucine 174–valine 194, alanine 204–tryptophan 224, and alanine 238–leucine 258.

This sequence belongs to the UPF0761 family.

Its subcellular location is the cell inner membrane. This chain is UPF0761 membrane protein MS0032, found in Mannheimia succiniciproducens (strain KCTC 0769BP / MBEL55E).